Reading from the N-terminus, the 208-residue chain is Peroxiredoxin (208 aa).

Residues 2 to 156 form the Thioredoxin domain; sequence PLLGDDFPQL…IVRAVKALQT (155 aa). C44 acts as the Cysteine sulfenic acid (-SOH) intermediate in catalysis. A substrate-binding site is contributed by R119.

It belongs to the peroxiredoxin family. Prx6 subfamily. As to quaternary structure, homodecamer. Pentamer of dimers that assemble into a ring structure.

It localises to the cytoplasm. The enzyme catalyses a hydroperoxide + [thioredoxin]-dithiol = an alcohol + [thioredoxin]-disulfide + H2O. Thiol-specific peroxidase that catalyzes the reduction of hydrogen peroxide and organic hydroperoxides to water and alcohols, respectively. Plays a role in cell protection against oxidative stress by detoxifying peroxides. This is Peroxiredoxin from Treponema denticola (strain ATCC 35405 / DSM 14222 / CIP 103919 / JCM 8153 / KCTC 15104).